Consider the following 421-residue polypeptide: UPF0415 protein C7orf25 (421 aa).

This sequence belongs to the UPF0415 family.

This is UPF0415 protein C7orf25 (C7orf25) from Homo sapiens (Human).